Reading from the N-terminus, the 233-residue chain is MSNYHHNHNYQHRPRGYERLPGKRLPDRWNIYDNVGRDIDGTRFVPFKTPLDSSFFDGKNMPVELQFGVKTLISLAQQANKQIGLVIDLTNTDRYYKKTEWADHGVKYLKLNCPGHEVNEREDLVQDFINAVKEFVNDKENDGKLIGVHCTHGLNRTGYLICRYMIDVDNYSASDAISMFEYYRGHPMEREHYKKSLYEAERKKKYGKSSGKSSGNSADSTISSEQLHRNNSQ.

A compositionally biased stretch (basic residues) spans 1–14 (MSNYHHNHNYQHRP). The segment at 1–21 (MSNYHHNHNYQHRPRGYERLP) is disordered. Residues 34–206 (NVGRDIDGTR…LYEAERKKKY (173 aa)) form the Tyrosine-protein phosphatase domain. C150 acts as the Phosphocysteine intermediate in catalysis. 151–156 (THGLNR) is a substrate binding site. R156 serves as the catalytic Proton donor/acceptor. The segment at 204–233 (KKYGKSSGKSSGNSADSTISSEQLHRNNSQ) is disordered. Positions 208-217 (KSSGKSSGNS) are enriched in low complexity. Positions 218–233 (ADSTISSEQLHRNNSQ) are enriched in polar residues.

It belongs to the protein-tyrosine phosphatase family. Non-receptor class dual specificity subfamily. As to quaternary structure, interacts with the ERI/DICER complex component dcr-1. Interacts with ERI/DICER complex components rrf-3 and isoform b of eri-1. Interacts with drh-3 and rde-8.

The protein localises to the cytoplasm. It is found in the nucleus. RNA polyphosphatase which has RNA 5'-triphosphatase and diphosphatase activities. Displays poor protein-tyrosine phosphatase activity. Binds to 5'-triphosphorylated RNAs (also called ppp-RNAs). Dephosphorylates ppp-RNAs converting them to 5'-monophosphorylated RNAs (also called p-RNAs). During small-RNA-mediated gene-silencing or RNA interference (RNAi), involved in the dcr-1-mediated processing of an amplified dsRNA intermediate. This is most likely in association with several components of the ERI/DICER complex including dcr-1, eri-1 and rrf-3. Plays a role in the biogenesis of 26G small interfering RNAs (26G-siRNAs), which are a class of 26 nucleotide siRNAs that possess a guanine residue at the 5'-end, by dephosphorylating 5'-triphosphorylated 26G-siRNAs prior to their maturation by the ERI/DICER complex. Plays a role in the biogenesis of csr-1-bound 22G small interfering RNAs (22G-siRNAs), which are a class of 22 nucleotide siRNAs that possess a guanine residue at the 5'-end. Not required for the biogenesis of microRNAs (miRNA) or for the biogenesis of a class of 21 nucleotide PIWI-interacting RNAs (piRNAs) that possess a uracil residue at the 5'-end (also called 21U-RNAs). The chain is RNA/RNP complex-1-interacting phosphatase homolog from Caenorhabditis elegans.